Consider the following 514-residue polypeptide: Alstonine synthase (514 aa).

A helical transmembrane segment spans residues 4-24 (PQFSCLLPAFFLLVVFLFLLI). N-linked (GlcNAc...) asparagine glycosylation is present at Asn-428. Heme is bound at residue Cys-450.

It belongs to the cytochrome P450 family. It depends on heme as a cofactor.

Its subcellular location is the membrane. The enzyme catalyses tetrahydroalstonine + A + reduced [NADPH--hemoprotein reductase] + O2 = alstonine + AH2 + oxidized [NADPH--hemoprotein reductase] + 2 H2O + H(+). It participates in alkaloid biosynthesis. A cytochrome P450 monooxygenase involved in the biosynthesis of pentacyclic alkaloids natural products such as alstonine, putative antipsychotic compounds. Catalyzes the conversion of tetrahydroalstonine to alstonine. No oxidative activity towards ajmalicine. The sequence is that of Alstonine synthase from Alstonia scholaris (Dogbane).